Consider the following 170-residue polypeptide: Small ribosomal subunit protein uS5 (170 aa).

The S5 DRBM domain occupies 16–79 (IEDQLVAINR…EAGKKNMISV (64 aa)).

It belongs to the universal ribosomal protein uS5 family. As to quaternary structure, part of the 30S ribosomal subunit. Contacts proteins S4 and S8.

In terms of biological role, with S4 and S12 plays an important role in translational accuracy. Functionally, located at the back of the 30S subunit body where it stabilizes the conformation of the head with respect to the body. In Lactobacillus delbrueckii subsp. bulgaricus (strain ATCC 11842 / DSM 20081 / BCRC 10696 / JCM 1002 / NBRC 13953 / NCIMB 11778 / NCTC 12712 / WDCM 00102 / Lb 14), this protein is Small ribosomal subunit protein uS5.